The primary structure comprises 204 residues: MQRDPAGAPRPAGASAAAPDLAGDPAFVLLGEFGRAHGLQGEVRLKSYTADPMAIGSYGPLTGANGRAIALTALRPASGAPDMLIARVSGVSGRDAAEALNRLALYVRRECLGAPEDEDEFFSADLIGLAVVDAAGTRLGTIRAVPNYGGGDLLEIEPTGGGAAALLPFTRAFVPKVDIAAREVTIDPPDDLFAPAKPSPEDEV.

Residues 117–192 (DEDEFFSADL…EVTIDPPDDL (76 aa)) form the PRC barrel domain.

The protein belongs to the RimM family. In terms of assembly, binds ribosomal protein uS19.

It localises to the cytoplasm. Functionally, an accessory protein needed during the final step in the assembly of 30S ribosomal subunit, possibly for assembly of the head region. Essential for efficient processing of 16S rRNA. May be needed both before and after RbfA during the maturation of 16S rRNA. It has affinity for free ribosomal 30S subunits but not for 70S ribosomes. The protein is Ribosome maturation factor RimM of Methylobacterium nodulans (strain LMG 21967 / CNCM I-2342 / ORS 2060).